The chain runs to 157 residues: Aspartate carbamoyltransferase regulatory chain (157 aa).

Residues C108, C113, C138, and C141 each contribute to the Zn(2+) site.

The protein belongs to the PyrI family. Contains catalytic and regulatory chains. Requires Zn(2+) as cofactor.

Involved in allosteric regulation of aspartate carbamoyltransferase. This is Aspartate carbamoyltransferase regulatory chain from Ignicoccus hospitalis (strain KIN4/I / DSM 18386 / JCM 14125).